The following is a 1369-amino-acid chain: MutS protein homolog 5 (1369 aa).

The segment at 138-190 (IYEDGTTEEGTSEDTVPTWDSSLAYSTDETTAEKEEKEEDEDDDDEGLPAKLN) is disordered. The span at 173–184 (EKEEDEDDDDEG) shows a compositional bias: acidic residues. Residue 639–646 (GPNACGKS) participates in ATP binding. Disordered stretches follow at residues 880–915 (SMRNVSEEIEKERSEASTPASKSRSTITARSNSVLS), 935–1135 (KKKK…RSSN), 1153–1182 (LKSQDTYDPNVTPRSSSRRELRPDVSHSQN), and 1248–1278 (NFIFKTPEPRSSEKQRSLLKNKGQASNSSIS). The span at 884-894 (VSEEIEKERSE) shows a compositional bias: basic and acidic residues. 2 stretches are compositionally biased toward polar residues: residues 895–915 (ASTPASKSRSTITARSNSVLS) and 941–950 (TGSSMESSMS). Over residues 954–967 (FQEEDEGTEGEEDQ) the composition is skewed to acidic residues. Positions 991–1003 (QSINSRHSFSTRT) are enriched in polar residues. Over residues 1024–1037 (STSTSSPGPSASKS) the composition is skewed to low complexity. The span at 1049-1065 (VKESQVLETPKQLSISS) shows a compositional bias: polar residues. Over residues 1073–1084 (SSEKDVISRVSE) the composition is skewed to basic and acidic residues. Polar residues-rich tracts occupy residues 1111-1124 (KNRSMNQSLIQSAR) and 1153-1167 (LKSQDTYDPNVTPRS). The segment covering 1254–1263 (PEPRSSEKQR) has biased composition (basic and acidic residues).

This sequence belongs to the DNA mismatch repair MutS family. In terms of assembly, heterooligomer of him-14 and msh-5. Interacts with the brc-1-brd-1 heterodimer. In terms of tissue distribution, expressed in the germline.

Its subcellular location is the chromosome. In terms of biological role, crucial component in meiotic recombination, functioning at some point after the initiation step of recombination. Plays a role in promoting the crossover outcome of meiotic recombination events. Required for formation of normal meiotic crossover, and crossover and chiasmata generated by artificially made DNA breaks. Together with him-14 and zhp-3 plays a role in the activation of DNA damage-dependent apoptosis at the DNA damage checkpoint in pachytene cells. This Caenorhabditis elegans protein is MutS protein homolog 5.